We begin with the raw amino-acid sequence, 417 residues long: MLKKAMNIADYDPELFKAIEDETCRQEEHIELIASENYTSPRVMEAQGSQLTNKYAEGYPGKRYYGGCEYVDVVETLAIERAKELFGATYANVQPHSGSQANSAVFMALLQPGDTVLGMNLAHGGHLTHGSPVNFSGKLYNIIPYGIDEAGKIDYDEMERLAIEHKPKMIIGGFSAFSGIVDWARMREIADKIGAYLFVDMAHVAGLIAAGVYPTPVPHAHVVTSTTHKTLAGPRGGIIISAADDEVLYKKLNSAVFPGGQGGPLMHVIAGKAVAFKEALEPEFKVYQQQVVKNAKAMVEVFLARGYKIVSGGTENHLMLVDLIGRDLTGKEADAALGSANITVNKNSVPNDPRSPFVTSGIRIGSPAITRRGFKEAEAKELTGWICDILDDATNTVVTDRVKGQVLALCARFPVYG.

(6S)-5,6,7,8-tetrahydrofolate-binding positions include Leu-121 and 125-127; that span reads GHL. Lys-229 carries the N6-(pyridoxal phosphate)lysine modification. 355-357 serves as a coordination point for (6S)-5,6,7,8-tetrahydrofolate; sequence SPF.

This sequence belongs to the SHMT family. As to quaternary structure, homodimer. Requires pyridoxal 5'-phosphate as cofactor.

It localises to the cytoplasm. The catalysed reaction is (6R)-5,10-methylene-5,6,7,8-tetrahydrofolate + glycine + H2O = (6S)-5,6,7,8-tetrahydrofolate + L-serine. Its pathway is one-carbon metabolism; tetrahydrofolate interconversion. It participates in amino-acid biosynthesis; glycine biosynthesis; glycine from L-serine: step 1/1. Catalyzes the reversible interconversion of serine and glycine with tetrahydrofolate (THF) serving as the one-carbon carrier. This reaction serves as the major source of one-carbon groups required for the biosynthesis of purines, thymidylate, methionine, and other important biomolecules. Also exhibits THF-independent aldolase activity toward beta-hydroxyamino acids, producing glycine and aldehydes, via a retro-aldol mechanism. The protein is Serine hydroxymethyltransferase of Shewanella frigidimarina (strain NCIMB 400).